Here is a 160-residue protein sequence, read N- to C-terminus: Transcription elongation factor GreA (160 aa).

The stretch at 49 to 73 forms a coiled coil; that stretch reads HAAKEEQSHNEGRIADLEDKLARAD.

It belongs to the GreA/GreB family.

Its function is as follows. Necessary for efficient RNA polymerase transcription elongation past template-encoded arresting sites. The arresting sites in DNA have the property of trapping a certain fraction of elongating RNA polymerases that pass through, resulting in locked ternary complexes. Cleavage of the nascent transcript by cleavage factors such as GreA or GreB allows the resumption of elongation from the new 3'terminus. GreA releases sequences of 2 to 3 nucleotides. The chain is Transcription elongation factor GreA from Rhodopseudomonas palustris (strain BisA53).